Reading from the N-terminus, the 398-residue chain is Na(+)/H(+) antiporter NhaA (398 aa).

Transmembrane regions (helical) follow at residues Met-9–Val-29, Leu-57–Leu-77, Ala-95–Met-115, Ala-124–Leu-144, Val-154–Phe-174, Thr-177–Met-197, Phe-204–Ile-224, Ala-226–Val-246, Trp-255–Ile-275, Phe-288–Phe-308, Ile-329–Leu-349, and Ile-359–Leu-379.

Belongs to the NhaA Na(+)/H(+) (TC 2.A.33) antiporter family.

It is found in the cell inner membrane. The catalysed reaction is Na(+)(in) + 2 H(+)(out) = Na(+)(out) + 2 H(+)(in). Na(+)/H(+) antiporter that extrudes sodium in exchange for external protons. In Sodalis glossinidius (strain morsitans), this protein is Na(+)/H(+) antiporter NhaA.